Reading from the N-terminus, the 430-residue chain is Glutamyl-tRNA reductase (430 aa).

Substrate-binding positions include 50-53 (TCNR), Ser108, 113-115 (EPQ), and Gln119. Cys51 functions as the Nucleophile in the catalytic mechanism. 188-193 (GAGEMA) contributes to the NADP(+) binding site.

Belongs to the glutamyl-tRNA reductase family. In terms of assembly, homodimer.

It catalyses the reaction (S)-4-amino-5-oxopentanoate + tRNA(Glu) + NADP(+) = L-glutamyl-tRNA(Glu) + NADPH + H(+). It functions in the pathway porphyrin-containing compound metabolism; protoporphyrin-IX biosynthesis; 5-aminolevulinate from L-glutamyl-tRNA(Glu): step 1/2. Catalyzes the NADPH-dependent reduction of glutamyl-tRNA(Glu) to glutamate 1-semialdehyde (GSA). This Lawsonia intracellularis (strain PHE/MN1-00) protein is Glutamyl-tRNA reductase.